A 162-amino-acid polypeptide reads, in one-letter code: uncharacterized protein (162 aa).

Residues 1–23 (MAQLPLSPAPQRPETKTPGKPEA) are disordered. Over residues 13–23 (PETKTPGKPEA) the composition is skewed to basic and acidic residues.

This is an uncharacterized protein from Rhodobacter capsulatus (Rhodopseudomonas capsulata).